The following is a 427-amino-acid chain: Serine hydroxymethyltransferase (427 aa).

Position 122-124 (122-124 (GHI)) interacts with (6S)-5,6,7,8-tetrahydrofolate. An N6-(pyridoxal phosphate)lysine modification is found at Lys228.

It belongs to the SHMT family. In terms of assembly, homodimer. The cofactor is pyridoxal 5'-phosphate.

Its subcellular location is the cytoplasm. It functions in the pathway amino-acid biosynthesis; glycine biosynthesis; glycine from L-serine: step 1/1. Catalyzes the reversible interconversion of serine and glycine with a modified folate serving as the one-carbon carrier. Also exhibits a pteridine-independent aldolase activity toward beta-hydroxyamino acids, producing glycine and aldehydes, via a retro-aldol mechanism. In Thermococcus onnurineus (strain NA1), this protein is Serine hydroxymethyltransferase.